The sequence spans 532 residues: CTP synthase (532 aa).

The segment at 1-265 (MKYIVVTGGV…DEYLMRKLNL (265 aa)) is amidoligase domain. S12 contacts CTP. S12 lines the UTP pocket. ATP is bound by residues 13–18 (GLGKGI) and D70. Positions 70 and 140 each coordinate Mg(2+). Residues 147-149 (DIE), 186-191 (KTKPTQ), and K222 contribute to the CTP site. UTP-binding positions include 186 to 191 (KTKPTQ) and K222. The 241-residue stretch at 289–529 (SIAIVGKYVD…VRAALKYRRE (241 aa)) folds into the Glutamine amidotransferase type-1 domain. L-glutamine is bound at residue G349. C376 (nucleophile; for glutamine hydrolysis) is an active-site residue. L-glutamine is bound by residues 377–380 (FGFQ), E400, and R457. Residues H502 and E504 contribute to the active site.

This sequence belongs to the CTP synthase family. As to quaternary structure, homotetramer.

It carries out the reaction UTP + L-glutamine + ATP + H2O = CTP + L-glutamate + ADP + phosphate + 2 H(+). The catalysed reaction is L-glutamine + H2O = L-glutamate + NH4(+). It catalyses the reaction UTP + NH4(+) + ATP = CTP + ADP + phosphate + 2 H(+). It participates in pyrimidine metabolism; CTP biosynthesis via de novo pathway; CTP from UDP: step 2/2. With respect to regulation, allosterically activated by GTP, when glutamine is the substrate; GTP has no effect on the reaction when ammonia is the substrate. The allosteric effector GTP functions by stabilizing the protein conformation that binds the tetrahedral intermediate(s) formed during glutamine hydrolysis. Inhibited by the product CTP, via allosteric rather than competitive inhibition. In terms of biological role, catalyzes the ATP-dependent amination of UTP to CTP with either L-glutamine or ammonia as the source of nitrogen. Regulates intracellular CTP levels through interactions with the four ribonucleotide triphosphates. This chain is CTP synthase, found in Archaeoglobus fulgidus (strain ATCC 49558 / DSM 4304 / JCM 9628 / NBRC 100126 / VC-16).